Reading from the N-terminus, the 179-residue chain is UPF0227 protein VIBHAR_01524 (179 aa).

It belongs to the UPF0227 family.

This chain is UPF0227 protein VIBHAR_01524, found in Vibrio campbellii (strain ATCC BAA-1116).